An 89-amino-acid polypeptide reads, in one-letter code: Large ribosomal subunit protein eL34 (89 aa).

The tract at residues 1 to 32 (MPAPRFKSGSFKKISKRGPGNKTLTHHRRSKV) is disordered.

The protein belongs to the eukaryotic ribosomal protein eL34 family.

The sequence is that of Large ribosomal subunit protein eL34 from Methanococcus aeolicus (strain ATCC BAA-1280 / DSM 17508 / OCM 812 / Nankai-3).